Consider the following 261-residue polypeptide: Cytochrome c oxidase subunit 3 (261 aa).

At 1-15 (MAHQAHSYHMVDPSP) the chain is on the mitochondrial matrix side. The helical transmembrane segment at 16 to 34 (WPIFGATAALLTTSGLIMW) threads the bilayer. Residues 35–40 (FHYNSL) lie on the Mitochondrial intermembrane side of the membrane. Residues 41–66 (YLLTLGLLSMFLVMIQWWRDIVREST) form a helical membrane-spanning segment. Over 67–72 (FQGHHT) the chain is Mitochondrial matrix. A helical transmembrane segment spans residues 73-105 (PTVQKGLRYGMILFITSEAFFFLGFFWAFFHSS). The Mitochondrial intermembrane segment spans residues 106–128 (LAPTPELGAQWPPTGINPLNPLE). Residues 129–152 (VPLLNTAILLASGVTVTWAHHSIT) traverse the membrane as a helical segment. The Mitochondrial matrix portion of the chain corresponds to 153-155 (ESN). Residues 156-183 (RKQAIHALSLTIILGFYFTALQAMEYHE) form a helical membrane-spanning segment. Residues 184 to 190 (ASFSIAD) lie on the Mitochondrial intermembrane side of the membrane. The chain crosses the membrane as a helical span at residues 191-223 (GVYGSTFFVATGFHGLHVIIGSSFLTVCLLRLI). Topologically, residues 224–232 (KFHFTTNHH) are mitochondrial matrix. A helical membrane pass occupies residues 233–256 (FGFEAAAWYWHFVDVIWLFLYMSI). At 257-261 (YWWGS) the chain is on the mitochondrial intermembrane side.

The protein belongs to the cytochrome c oxidase subunit 3 family. As to quaternary structure, component of the cytochrome c oxidase (complex IV, CIV), a multisubunit enzyme composed of 14 subunits. The complex is composed of a catalytic core of 3 subunits MT-CO1, MT-CO2 and MT-CO3, encoded in the mitochondrial DNA, and 11 supernumerary subunits COX4I, COX5A, COX5B, COX6A, COX6B, COX6C, COX7A, COX7B, COX7C, COX8 and NDUFA4, which are encoded in the nuclear genome. The complex exists as a monomer or a dimer and forms supercomplexes (SCs) in the inner mitochondrial membrane with NADH-ubiquinone oxidoreductase (complex I, CI) and ubiquinol-cytochrome c oxidoreductase (cytochrome b-c1 complex, complex III, CIII), resulting in different assemblies (supercomplex SCI(1)III(2)IV(1) and megacomplex MCI(2)III(2)IV(2)).

It is found in the mitochondrion inner membrane. It carries out the reaction 4 Fe(II)-[cytochrome c] + O2 + 8 H(+)(in) = 4 Fe(III)-[cytochrome c] + 2 H2O + 4 H(+)(out). Functionally, component of the cytochrome c oxidase, the last enzyme in the mitochondrial electron transport chain which drives oxidative phosphorylation. The respiratory chain contains 3 multisubunit complexes succinate dehydrogenase (complex II, CII), ubiquinol-cytochrome c oxidoreductase (cytochrome b-c1 complex, complex III, CIII) and cytochrome c oxidase (complex IV, CIV), that cooperate to transfer electrons derived from NADH and succinate to molecular oxygen, creating an electrochemical gradient over the inner membrane that drives transmembrane transport and the ATP synthase. Cytochrome c oxidase is the component of the respiratory chain that catalyzes the reduction of oxygen to water. Electrons originating from reduced cytochrome c in the intermembrane space (IMS) are transferred via the dinuclear copper A center (CU(A)) of subunit 2 and heme A of subunit 1 to the active site in subunit 1, a binuclear center (BNC) formed by heme A3 and copper B (CU(B)). The BNC reduces molecular oxygen to 2 water molecules using 4 electrons from cytochrome c in the IMS and 4 protons from the mitochondrial matrix. This is Cytochrome c oxidase subunit 3 (MT-CO3) from Struthio camelus (Common ostrich).